The sequence spans 288 residues: Polyamine aminopropyltransferase (288 aa).

The PABS domain maps to Glu-9–Asp-238. Gln-33 lines the S-methyl-5'-thioadenosine pocket. Spermidine-binding residues include His-64 and Asp-88. S-methyl-5'-thioadenosine is bound by residues Glu-108 and Asp-140–Gly-141. The active-site Proton acceptor is Asp-158. Asp-158 to Asp-161 lines the spermidine pocket. Position 165 (Pro-165) interacts with S-methyl-5'-thioadenosine.

It belongs to the spermidine/spermine synthase family. Homodimer or homotetramer.

Its subcellular location is the cytoplasm. It catalyses the reaction S-adenosyl 3-(methylsulfanyl)propylamine + putrescine = S-methyl-5'-thioadenosine + spermidine + H(+). Its pathway is amine and polyamine biosynthesis; spermidine biosynthesis; spermidine from putrescine: step 1/1. Functionally, catalyzes the irreversible transfer of a propylamine group from the amino donor S-adenosylmethioninamine (decarboxy-AdoMet) to putrescine (1,4-diaminobutane) to yield spermidine. The protein is Polyamine aminopropyltransferase of Shigella boydii serotype 4 (strain Sb227).